A 309-amino-acid chain; its full sequence is Methionyl-tRNA formyltransferase (309 aa).

Residue 109–112 (SLLP) participates in (6S)-5,6,7,8-tetrahydrofolate binding.

Belongs to the Fmt family.

The catalysed reaction is L-methionyl-tRNA(fMet) + (6R)-10-formyltetrahydrofolate = N-formyl-L-methionyl-tRNA(fMet) + (6S)-5,6,7,8-tetrahydrofolate + H(+). Functionally, attaches a formyl group to the free amino group of methionyl-tRNA(fMet). The formyl group appears to play a dual role in the initiator identity of N-formylmethionyl-tRNA by promoting its recognition by IF2 and preventing the misappropriation of this tRNA by the elongation apparatus. The sequence is that of Methionyl-tRNA formyltransferase from Clostridium perfringens (strain 13 / Type A).